A 698-amino-acid chain; its full sequence is MOXD1 homolog 1 (698 aa).

The signal sequence occupies residues 1–20 (MSVQDVLWIVLTVQLSFGLA). N-linked (GlcNAc...) asparagine glycans are attached at residues N36, N140, and N221. The region spanning 54–174 (GLYWLKWWIN…DTFKVLWSIG (121 aa)) is the DOMON domain. Y232 is an active-site residue. H265 and H266 together coordinate Cu cation. A disulfide bond links C272 and C309. 3 residues coordinate Cu cation: H347, H425, and H427. 2 cysteine pairs are disulfide-bonded: C403–C516 and C479–C501. H425 is an active-site residue. An N-linked (GlcNAc...) asparagine glycan is attached at N465. M500 contributes to the Cu cation binding site. N-linked (GlcNAc...) asparagine glycans are attached at residues N538 and N561.

This sequence belongs to the copper type II ascorbate-dependent monooxygenase family. Requires Cu(2+) as cofactor.

Its subcellular location is the secreted. The polypeptide is MOXD1 homolog 1 (Drosophila melanogaster (Fruit fly)).